The following is a 184-amino-acid chain: MDTQKIEAAVKMIIEAVGEDANREGLQETPARVARMYQEIFSGLGQTAEEHLSKSFEIIDDNMVVEKDIFFHTMCEHHFLPFYGRAHIAYIPDGRVAGLSKLARTVEVYSKKPQIQERLNIEVADALMEYLGAKGAFVVIEAEHMCMSMRGVRKPGTATLTTVARGLFETDKDLRDQAYRLMGL.

Positions 75, 78, and 146 each coordinate Zn(2+).

The protein belongs to the GTP cyclohydrolase I family. Homomer.

The catalysed reaction is GTP + H2O = 7,8-dihydroneopterin 3'-triphosphate + formate + H(+). It participates in cofactor biosynthesis; 7,8-dihydroneopterin triphosphate biosynthesis; 7,8-dihydroneopterin triphosphate from GTP: step 1/1. This is GTP cyclohydrolase 1 from Streptococcus pneumoniae (strain ATCC 700669 / Spain 23F-1).